The primary structure comprises 647 residues: Threonine--tRNA ligase (647 aa).

A TGS domain is found at 1-61 (MIKITFPDGA…EEDGSIEIVT (61 aa)). A catalytic region spans residues 240–538 (DHRKLGKELD…LIETYKGAFP (299 aa)). Zn(2+)-binding residues include Cys334, His385, and His515.

This sequence belongs to the class-II aminoacyl-tRNA synthetase family. In terms of assembly, homodimer. Requires Zn(2+) as cofactor.

It localises to the cytoplasm. It carries out the reaction tRNA(Thr) + L-threonine + ATP = L-threonyl-tRNA(Thr) + AMP + diphosphate + H(+). Functionally, catalyzes the attachment of threonine to tRNA(Thr) in a two-step reaction: L-threonine is first activated by ATP to form Thr-AMP and then transferred to the acceptor end of tRNA(Thr). Also edits incorrectly charged L-seryl-tRNA(Thr). This chain is Threonine--tRNA ligase, found in Streptococcus pyogenes serotype M28 (strain MGAS6180).